Consider the following 139-residue polypeptide: D-ribose pyranase (139 aa).

Residue His-20 is the Proton donor of the active site. Substrate is bound by residues Asp-28, His-106, and 128 to 130 (YAN).

This sequence belongs to the RbsD / FucU family. RbsD subfamily. As to quaternary structure, homodecamer.

The protein resides in the cytoplasm. It carries out the reaction beta-D-ribopyranose = beta-D-ribofuranose. It participates in carbohydrate metabolism; D-ribose degradation; D-ribose 5-phosphate from beta-D-ribopyranose: step 1/2. In terms of biological role, catalyzes the interconversion of beta-pyran and beta-furan forms of D-ribose. This chain is D-ribose pyranase, found in Aeromonas hydrophila subsp. hydrophila (strain ATCC 7966 / DSM 30187 / BCRC 13018 / CCUG 14551 / JCM 1027 / KCTC 2358 / NCIMB 9240 / NCTC 8049).